A 492-amino-acid chain; its full sequence is Aerolysin-4 (492 aa).

The first 23 residues, 1–23 (MKKLKITGLSLIISGLLMAQAQA), serve as a signal peptide directing secretion. 2 cysteine pairs are disulfide-bonded: Cys42–Cys98 and Cys182–Cys187. Residues 68-84 (WQISGLANGWVIMGPGY) form an interaction with host N-linked glycan region. The interval 256-288 (YGLSEKVTTKNKFKWPLVGETELSIEIAANQSW) is part of the transmembrane beta-barrel after proteolytic activation of the toxin and insertion into the host membrane. Residues 346–355 (RWGGNAWYTH) are interaction with glycans from host GPI-anchor. A propeptide spanning residues 446–492 (AAASHSSRARNLSAGQGLRLEIPLDAQELSGLGFNNVSLSVTPAANQ) is cleaved from the precursor.

It belongs to the aerolysin family. As to quaternary structure, homodimer in solution; homoheptamer in the host membrane. After binding to GPI-anchored proteins in target membranes and proteolytic removal of the C-terminal propeptide, the protein assembles into a heptameric pre-pore complex. A further conformation change leads to insertion into the host membrane. In terms of processing, proteolytic cleavage and subsequent release of the propeptide trigger a major conformation change, leading to the formation of a heptameric pre-pore that then inserts into the host membrane.

The protein resides in the secreted. The protein localises to the host cell membrane. Functionally, secreted, cytolytic toxin that forms pores in host membranes after proteolytic removal of a C-terminal propeptide, leading to destruction of the membrane permeability barrier and cell death. The pores are formed by transmembrane beta-strands and are approximately 3 nm in diameter. The sequence is that of Aerolysin-4 (ahh4) from Aeromonas hydrophila.